The primary structure comprises 321 residues: Lipoyl synthase (321 aa).

[4Fe-4S] cluster is bound by residues C68, C73, C79, C94, C98, C101, and S308. The region spanning 80–297 (FNHGTATFMI…KVIAEDLGFS (218 aa)) is the Radical SAM core domain.

The protein belongs to the radical SAM superfamily. Lipoyl synthase family. [4Fe-4S] cluster serves as cofactor.

It localises to the cytoplasm. It carries out the reaction [[Fe-S] cluster scaffold protein carrying a second [4Fe-4S](2+) cluster] + N(6)-octanoyl-L-lysyl-[protein] + 2 oxidized [2Fe-2S]-[ferredoxin] + 2 S-adenosyl-L-methionine + 4 H(+) = [[Fe-S] cluster scaffold protein] + N(6)-[(R)-dihydrolipoyl]-L-lysyl-[protein] + 4 Fe(3+) + 2 hydrogen sulfide + 2 5'-deoxyadenosine + 2 L-methionine + 2 reduced [2Fe-2S]-[ferredoxin]. The protein operates within protein modification; protein lipoylation via endogenous pathway; protein N(6)-(lipoyl)lysine from octanoyl-[acyl-carrier-protein]: step 2/2. Its function is as follows. Catalyzes the radical-mediated insertion of two sulfur atoms into the C-6 and C-8 positions of the octanoyl moiety bound to the lipoyl domains of lipoate-dependent enzymes, thereby converting the octanoylated domains into lipoylated derivatives. In Shewanella amazonensis (strain ATCC BAA-1098 / SB2B), this protein is Lipoyl synthase.